Here is a 494-residue protein sequence, read N- to C-terminus: Cytochrome P450 71D94 (494 aa).

A helical; Signal-anchor for type II membrane protein transmembrane segment spans residues 1–21 (MELNLLLVIIILVATYTVSLL). Residue cysteine 434 participates in heme binding.

The protein belongs to the cytochrome P450 family. The cofactor is heme.

The protein localises to the endoplasmic reticulum membrane. Its function is as follows. Cytochrome P450 oxygenase of undefined substrate. Not active with limonene, (+)- or (-)-piperitone, (-)-isopiperitone, piperitenone or (+)-pulegone. The sequence is that of Cytochrome P450 71D94 (CYP71D94) from Mentha gracilis (Gingermint).